A 57-amino-acid polypeptide reads, in one-letter code: Small hydrophobic protein (57 aa).

Residues 1–8 (MPAIQPPL) are Virion surface-facing. A helical transmembrane segment spans residues 9–29 (YLTFLLLILLYLIITLYVWTI). The Intravirion segment spans residues 30–57 (LTITYKTTVRYAALYQRSFSRWGFDQSL).

This sequence belongs to the rubulavirus small hydrophobic protein family. Interacts with host TNFRSF1A, RIPK1 and IRAK1; these interactions interfere with host NF-kappa-B activation at the level of receptor complexes. Interacts with host protein UBQLN4.

The protein resides in the virion membrane. It localises to the host cell membrane. In terms of biological role, plays a role in the inhibition of the host NF-kappa-B pathway. This inhibition occurs at the receptor level, by preventing the signaling of TNFR1 as well as IL-1R and TLR3. This chain is Small hydrophobic protein (SH), found in Homo sapiens (Human).